A 157-amino-acid chain; its full sequence is RNA pyrophosphohydrolase (157 aa).

The Nudix hydrolase domain occupies 6–149; the sequence is SYRPNVAAVI…KRKVYRRVID (144 aa). Positions 43–64 match the Nudix box motif; it reads GGIDEGETPEDALYRELLEEIG.

The protein belongs to the Nudix hydrolase family. RppH subfamily. The cofactor is a divalent metal cation.

Functionally, accelerates the degradation of transcripts by removing pyrophosphate from the 5'-end of triphosphorylated RNA, leading to a more labile monophosphorylated state that can stimulate subsequent ribonuclease cleavage. This is RNA pyrophosphohydrolase from Sulfurovum sp. (strain NBC37-1).